We begin with the raw amino-acid sequence, 547 residues long: Chaperonin GroEL (547 aa).

ATP-binding positions include threonine 30–proline 33, lysine 51, aspartate 87–threonine 91, glycine 415, asparagine 478–alanine 480, and aspartate 494.

This sequence belongs to the chaperonin (HSP60) family. Forms a cylinder of 14 subunits composed of two heptameric rings stacked back-to-back. Interacts with the co-chaperonin GroES.

It is found in the cytoplasm. It carries out the reaction ATP + H2O + a folded polypeptide = ADP + phosphate + an unfolded polypeptide.. Together with its co-chaperonin GroES, plays an essential role in assisting protein folding. The GroEL-GroES system forms a nano-cage that allows encapsulation of the non-native substrate proteins and provides a physical environment optimized to promote and accelerate protein folding. The sequence is that of Chaperonin GroEL from Geobacter sp. (strain M21).